The chain runs to 186 residues: Ribosome-recycling factor (186 aa).

This sequence belongs to the RRF family.

It is found in the cytoplasm. Responsible for the release of ribosomes from messenger RNA at the termination of protein biosynthesis. May increase the efficiency of translation by recycling ribosomes from one round of translation to another. The sequence is that of Ribosome-recycling factor from Burkholderia ambifaria (strain ATCC BAA-244 / DSM 16087 / CCUG 44356 / LMG 19182 / AMMD) (Burkholderia cepacia (strain AMMD)).